We begin with the raw amino-acid sequence, 319 residues long: Polyprenal reductase (319 aa).

At Met-1–Ser-12 the chain is on the cytoplasmic side. A helical membrane pass occupies residues Leu-13–Leu-33. The Lumenal segment spans residues Gln-34–His-79. Residues Phe-80–Leu-100 traverse the membrane as a helical segment. The Cytoplasmic portion of the chain corresponds to Gln-101 to Pro-122. Residues Gln-123–Leu-143 traverse the membrane as a helical segment. Residues Arg-144–Gly-158 lie on the Lumenal side of the membrane. A helical transmembrane segment spans residues Val-159 to Ile-179. The Cytoplasmic segment spans residues Leu-180 to Asp-195. A helical membrane pass occupies residues Leu-196–Leu-216. Residues His-217 to Ser-266 lie on the Lumenal side of the membrane. Residues Ile-267–Leu-287 traverse the membrane as a helical segment. Residues Ser-288–Phe-319 are Cytoplasmic-facing.

Belongs to the steroid 5-alpha reductase family. Polyprenal reductase subfamily.

It localises to the endoplasmic reticulum membrane. It catalyses the reaction a di-trans,poly-cis-dolichal + NADP(+) = a di-trans,poly-cis-polyprenal + NADPH + H(+). The enzyme catalyses a 3-oxo-5alpha-steroid + NADP(+) = a 3-oxo-Delta(4)-steroid + NADPH + H(+). It carries out the reaction androst-4-ene-3,17-dione + NADPH + H(+) = 5alpha-androstan-3,17-dione + NADP(+). The catalysed reaction is 17beta-hydroxy-5alpha-androstan-3-one + NADP(+) = testosterone + NADPH + H(+). The protein operates within protein modification; protein glycosylation. Plays a key role in early steps of protein N-linked glycosylation by being involved in the conversion of polyprenol into dolichol. Acts as a polyprenal reductase that mediates the reduction of polyprenal into dolichal in a NADP-dependent mechanism. Dolichols are required for the synthesis of dolichol-linked monosaccharides and the oligosaccharide precursor used for N-glycosylation. Also able to convert testosterone (T) into 5-alpha-dihydrotestosterone (DHT). The protein is Polyprenal reductase (srd5a3) of Xenopus laevis (African clawed frog).